A 194-amino-acid chain; its full sequence is Leucyl/phenylalanyl-tRNA--protein transferase (194 aa).

This sequence belongs to the L/F-transferase family.

Its subcellular location is the cytoplasm. It carries out the reaction N-terminal L-lysyl-[protein] + L-leucyl-tRNA(Leu) = N-terminal L-leucyl-L-lysyl-[protein] + tRNA(Leu) + H(+). The catalysed reaction is N-terminal L-arginyl-[protein] + L-leucyl-tRNA(Leu) = N-terminal L-leucyl-L-arginyl-[protein] + tRNA(Leu) + H(+). It catalyses the reaction L-phenylalanyl-tRNA(Phe) + an N-terminal L-alpha-aminoacyl-[protein] = an N-terminal L-phenylalanyl-L-alpha-aminoacyl-[protein] + tRNA(Phe). Its function is as follows. Functions in the N-end rule pathway of protein degradation where it conjugates Leu, Phe and, less efficiently, Met from aminoacyl-tRNAs to the N-termini of proteins containing an N-terminal arginine or lysine. The chain is Leucyl/phenylalanyl-tRNA--protein transferase from Prosthecochloris aestuarii (strain DSM 271 / SK 413).